We begin with the raw amino-acid sequence, 2415 residues long: Bradyzoite-formation deficient protein 1 (2415 aa).

Disordered regions lie at residues 369–392, 418–481, and 761–845; these read WNKPEAARQEYHRASASARGPEET, HLTS…PYTR, and DGCG…QDTQ. The span at 419 to 429 shows a compositional bias: basic residues; sequence LTSRQHPNPRP. A compositionally biased stretch (basic and acidic residues) spans 430-443; the sequence is RMKEEHCGREREVL. Composition is skewed to polar residues over residues 444–460 and 832–843; these read SSEQPSDCGETQKTPAS and PRTTSSSSYGQD. A Myb-like domain is found at 921–968; that stretch reads WSAEEDASLAELVSRKGFKWALISSQLTGAFGIPRTGKQCRERWFNHV. In terms of domain architecture, HTH myb-type spans 969 to 1023; that stretch reads NPEVKKGDWSAEEDAMILMLQNELGNRWATIAKKLRGRTENAVKNRFISLSNARL. A DNA-binding region (H-T-H motif) is located at residues 996–1019; sequence WATIAKKLRGRTENAVKNRFISLS. Disordered stretches follow at residues 1027–1050, 1098–1127, 1206–1270, 1319–1343, 1501–1521, 1905–1932, 1959–2013, and 2161–2222; these read RPKRDGSSADCFSNRRTGSGKSSG, VSRPRQCTGTSPSCGHPSAGEGDPSHLKNT, NDER…NGLD, PACDHRGAPQNSVESGEQSPDAQRQ, QLWTSQETESDTNPSPNQQHE, VSRDKQREPPKNGLTGCDVPEYLGTSQS, RVRW…GSTA, and GTDA…EMQD. A compositionally biased stretch (polar residues) spans 1036 to 1050; sequence DCFSNRRTGSGKSSG. Residues 1227-1237 are compositionally biased toward basic and acidic residues; that stretch reads AHEHADIARSD. 2 stretches are compositionally biased toward polar residues: residues 1327–1343 and 1501–1520; these read PQNSVESGEQSPDAQRQ and QLWTSQETESDTNPSPNQQH. Residues 1974 to 1985 are compositionally biased toward polar residues; it reads SVSSGASNSATT. Basic and acidic residues predominate over residues 2181–2197; the sequence is QAHRRDGHDMQRVQRCD.

Its subcellular location is the nucleus. In terms of biological role, master transcription factor that controls the differentiation of acute-stage tachyzoite parasites into chronic-stage bradyzoites, which form intracellular cysts resistant to immune clearance and existing therapies. Sufficient to drive differentiation into bradyzoite stage. Following translation in response to stress conditions, binds to the promoter of many chronic stage-specific genes and promotes their expression, thereby driving differentiation into bradyzoites. The protein is Bradyzoite-formation deficient protein 1 of Toxoplasma gondii (strain ATCC 50611 / Me49).